Reading from the N-terminus, the 374-residue chain is Ribosomal RNA large subunit methyltransferase G (374 aa).

It belongs to the methyltransferase superfamily. RlmG family.

The protein resides in the cytoplasm. The catalysed reaction is guanosine(1835) in 23S rRNA + S-adenosyl-L-methionine = N(2)-methylguanosine(1835) in 23S rRNA + S-adenosyl-L-homocysteine + H(+). In terms of biological role, specifically methylates the guanine in position 1835 (m2G1835) of 23S rRNA. This Pseudomonas savastanoi pv. phaseolicola (strain 1448A / Race 6) (Pseudomonas syringae pv. phaseolicola (strain 1448A / Race 6)) protein is Ribosomal RNA large subunit methyltransferase G.